The following is a 647-amino-acid chain: MSDEVFSTTLAYTKSPKVTKRTTFQDELIRAITARSARQRSSEYSDDFDSDEIVSLGDFSDTSADENSVNKKMNDFHISDDEEKNPSKLLFLKTNKSNGNITKDEPVCAIKNEEEMAPDGCEDIVVKSFSESQNKDEEFEKDKIKMKPKPRILSIKSTSSAENNSLDTDDHFKPSPRPRSMLKKKSHMEEKDGLEDKETALSEELELHSAPSSLPTPNGIQLEAEKKAFSENLDPEDSCLTSLASSSLKQILGDSFSPGSEGNASGKDPNEEITENHNSLKSDENKENSFSADHVTTAVEKSKESQVTADDLEEEKAKAELIMDDDRTVDPLLSKSQSILISTSATASSKKTIEDRNIKNKKSTNNRASSASARLMTSEFLKKSSSKRRTPSTTTSSHYLGTLKVLDQKPSQKQSIEPDRADNIRAAVYQEWLEKKNVYLHEMHRIKRIESENLRIQNEQKKAAKREEALASFEAWKAMKEKEAKKIAAKKRLEEKNKKKTEEENAARKGEALQAFEKWKEKKMEYLKEKNRKEREYERAKKQKEEETVAEKKKDNLTAVEKWNEKKEAFFKQKEKEKINEKRKEELKRAEKKDKDKQAINEYEKWLENKEKQERIERKQKKRHSFLESEALPPWSPPSRTVFAKVF.

Ser2 bears the N-acetylserine mark. Tyr12 is modified (phosphotyrosine). Disordered regions lie at residues Lys127–Met323, Ser344–Ala421, Lys491–Gln514, Lys530–Lys553, Asn580–Ile600, and Gln613–Phe647. The span at Gln133–Lys145 shows a compositional bias: basic and acidic residues. Polar residues predominate over residues Ile155–Leu166. Over residues Pro174–Ser186 the composition is skewed to basic residues. Residues Lys184–Ala210 are a coiled coil. The span at His187–Ala200 shows a compositional bias: basic and acidic residues. 2 stretches are compositionally biased toward polar residues: residues Ala210–Gly219 and Cys239–Lys249. Basic and acidic residues predominate over residues Asp268 to Glu287. The stretch at Ala298–Thr328 forms a coiled coil. Over residues Asn365–Arg374 the composition is skewed to low complexity. A coiled-coil region spans residues Met443–Glu628.

As to quaternary structure, binds to purified microtubules via its C-terminus.

Its subcellular location is the cytoplasm. It localises to the cytoskeleton. The protein resides in the spindle. Functionally, involved in organization of the bipolar mitotic spindle. Required for bipolar spindle assembly, mitosis progression and cytokinesis. May act by stabilizing interphase microtubules. The sequence is that of Microtubule-associated protein 9 (MAP9) from Homo sapiens (Human).